The following is a 211-amino-acid chain: uncharacterized protein (211 aa).

Zn(2+) is bound by residues histidine 54, histidine 56, aspartate 58, histidine 59, histidine 129, aspartate 148, and histidine 189.

The protein belongs to the metallo-beta-lactamase superfamily. Glyoxalase II family. Zn(2+) is required as a cofactor.

This is an uncharacterized protein from Aquifex aeolicus (strain VF5).